The primary structure comprises 284 residues: Bifunctional protein FolD (284 aa).

NADP(+) is bound by residues 164–166 (GRS) and serine 189.

It belongs to the tetrahydrofolate dehydrogenase/cyclohydrolase family. As to quaternary structure, homodimer.

It carries out the reaction (6R)-5,10-methylene-5,6,7,8-tetrahydrofolate + NADP(+) = (6R)-5,10-methenyltetrahydrofolate + NADPH. The enzyme catalyses (6R)-5,10-methenyltetrahydrofolate + H2O = (6R)-10-formyltetrahydrofolate + H(+). It participates in one-carbon metabolism; tetrahydrofolate interconversion. Catalyzes the oxidation of 5,10-methylenetetrahydrofolate to 5,10-methenyltetrahydrofolate and then the hydrolysis of 5,10-methenyltetrahydrofolate to 10-formyltetrahydrofolate. This is Bifunctional protein FolD from Listeria welshimeri serovar 6b (strain ATCC 35897 / DSM 20650 / CCUG 15529 / CIP 8149 / NCTC 11857 / SLCC 5334 / V8).